Consider the following 524-residue polypeptide: Keratin, type II cytoskeletal 71 (524 aa).

The interval 1-130 (MSRQFTCKSG…DPEIQKVRAQ (130 aa)) is head. A coil 1A region spans residues 131 to 166 (EREQIKALNNKFASFIDKVRFLEQQNQVLQTKWELL). In terms of domain architecture, IF rod spans 131 to 444 (EREQIKALNN…KLLESEECRM (314 aa)). A linker 1 region spans residues 167–185 (QQLDLNNCKNNLEPILEGH). The tract at residues 186 to 277 (ISNMRKQLET…CLFEAEMAQI (92 aa)) is coil 1B. The tract at residues 278-301 (QSHISDMSVILSMDNNRNLDLDSI) is linker 12. Positions 302-440 (IDEVRAQYEE…ATYRKLLESE (139 aa)) are coil 2. The interval 441 to 524 (ECRMSGEYSS…LSTPSKKGGR (84 aa)) is tail. Positions 493–524 (GGENRSRGSASDYKDTLTKGSSLSTPSKKGGR) are disordered. Residues 494-509 (GENRSRGSASDYKDTL) show a composition bias toward basic and acidic residues. A compositionally biased stretch (polar residues) spans 510–524 (TKGSSLSTPSKKGGR).

Belongs to the intermediate filament family. Heterodimer of a type I and a type II keratin. Associates with KRT16 and/or KRT17. As to expression, specifically expressed in the inner root sheath (IRS) of the hair follicle. Present in Henle and the Huxley layers of the IRS, while expression in the cuticle is unsure (at protein level).

It is found in the cytoplasm. Its subcellular location is the cytoskeleton. Its function is as follows. Plays a central role in hair formation. Essential component of keratin intermediate filaments in the inner root sheath (IRS) of the hair follicle. The sequence is that of Keratin, type II cytoskeletal 71 (Krt71) from Mus musculus (Mouse).